The chain runs to 192 residues: MLLIVGLGNPGIEYEKTRHNIGWWVLDLLRTKLTGLNLRLLCYSRVYELKHELKKEVDFIVYPLTYMNNSGKAVKCLYEPRMDLVVIHDDLDLTVGKTRVRFGGSSAGHKGVSSIIDALGTDSFWRVKVGIGRPFSKQEVINYVLGEPQKNEKEVLIRAADYIADQLCLLITDRNFSRFQQNINSFNSNENN.

Y14 provides a ligand contact to tRNA. H19 serves as the catalytic Proton acceptor. Positions 66 and 68 each coordinate tRNA.

Belongs to the PTH family. Monomer.

The protein resides in the cytoplasm. It catalyses the reaction an N-acyl-L-alpha-aminoacyl-tRNA + H2O = an N-acyl-L-amino acid + a tRNA + H(+). In terms of biological role, hydrolyzes ribosome-free peptidyl-tRNAs (with 1 or more amino acids incorporated), which drop off the ribosome during protein synthesis, or as a result of ribosome stalling. Functionally, catalyzes the release of premature peptidyl moieties from peptidyl-tRNA molecules trapped in stalled 50S ribosomal subunits, and thus maintains levels of free tRNAs and 50S ribosomes. The sequence is that of Peptidyl-tRNA hydrolase from Coprothermobacter proteolyticus (strain ATCC 35245 / DSM 5265 / OCM 4 / BT).